Here is a 209-residue protein sequence, read N- to C-terminus: NAD(P)H-quinone oxidoreductase subunit I (209 aa).

4Fe-4S ferredoxin-type domains are found at residues 55–84 and 95–124; these read GRIH…VDWE and KHYS…MTEE. 8 residues coordinate [4Fe-4S] cluster: C64, C67, C70, C74, C104, C107, C110, and C114.

Belongs to the complex I 23 kDa subunit family. In terms of assembly, NDH-1 is composed of at least 11 different subunits. [4Fe-4S] cluster is required as a cofactor.

The protein resides in the cellular thylakoid membrane. It catalyses the reaction a plastoquinone + NADH + (n+1) H(+)(in) = a plastoquinol + NAD(+) + n H(+)(out). The catalysed reaction is a plastoquinone + NADPH + (n+1) H(+)(in) = a plastoquinol + NADP(+) + n H(+)(out). Functionally, NDH-1 shuttles electrons from an unknown electron donor, via FMN and iron-sulfur (Fe-S) centers, to quinones in the respiratory and/or the photosynthetic chain. The immediate electron acceptor for the enzyme in this species is believed to be plastoquinone. Couples the redox reaction to proton translocation, and thus conserves the redox energy in a proton gradient. The sequence is that of NAD(P)H-quinone oxidoreductase subunit I from Trichodesmium erythraeum (strain IMS101).